The sequence spans 411 residues: Ornithine aminotransferase (411 aa).

K257 is modified (N6-(pyridoxal phosphate)lysine).

This sequence belongs to the class-III pyridoxal-phosphate-dependent aminotransferase family. OAT subfamily. It depends on pyridoxal 5'-phosphate as a cofactor.

It localises to the cytoplasm. The enzyme catalyses a 2-oxocarboxylate + L-ornithine = L-glutamate 5-semialdehyde + an L-alpha-amino acid. It participates in amino-acid biosynthesis; L-proline biosynthesis; L-glutamate 5-semialdehyde from L-ornithine: step 1/1. Catalyzes the interconversion of ornithine to glutamate semialdehyde. This chain is Ornithine aminotransferase, found in Bordetella bronchiseptica (strain ATCC BAA-588 / NCTC 13252 / RB50) (Alcaligenes bronchisepticus).